A 110-amino-acid chain; its full sequence is Large ribosomal subunit protein uL22 (110 aa).

The span at 84 to 95 (ARGTASKIRKPT) shows a compositional bias: basic residues. Residues 84-110 (ARGTASKIRKPTSHVMVEVSKPEKKEA) are disordered.

The protein belongs to the universal ribosomal protein uL22 family. Part of the 50S ribosomal subunit.

Functionally, this protein binds specifically to 23S rRNA; its binding is stimulated by other ribosomal proteins, e.g. L4, L17, and L20. It is important during the early stages of 50S assembly. It makes multiple contacts with different domains of the 23S rRNA in the assembled 50S subunit and ribosome. The globular domain of the protein is located near the polypeptide exit tunnel on the outside of the subunit, while an extended beta-hairpin is found that lines the wall of the exit tunnel in the center of the 70S ribosome. The polypeptide is Large ribosomal subunit protein uL22 (Campylobacter concisus (strain 13826)).